We begin with the raw amino-acid sequence, 432 residues long: C-type cytochrome OmcS (432 aa).

The N-terminal stretch at 1-25 (MKKGMKVSLSVAAAALLMSAPAAFA) is a signal peptide.

It depends on heme as a cofactor.

The protein resides in the cell outer membrane. Its subcellular location is the cell surface. Plays an important role in extracellular electron transfer. Can transfer electrons to insoluble Fe(3+) oxides as well as other extracellular electron acceptors, including Mn(4+) oxide and humic substances. Essential for direct interspecies electron transfer (DIET) in cocultures with G.metallireducens. The chain is C-type cytochrome OmcS from Geobacter sulfurreducens (strain ATCC 51573 / DSM 12127 / PCA).